Reading from the N-terminus, the 427-residue chain is Methylthioribose kinase 2 (427 aa).

Residues 49 to 53, Lys-68, and 122 to 124 each bind ATP; these read DGNLN and RYI. A substrate-binding site is contributed by Asn-51. Residue Asp-243 coordinates substrate. 260-262 contacts ATP; sequence DPE. Arg-370 is a substrate binding site.

It belongs to the methylthioribose kinase family. As to quaternary structure, homodimer.

The enzyme catalyses 5-(methylsulfanyl)-D-ribose + ATP = 5-(methylsulfanyl)-alpha-D-ribose 1-phosphate + ADP + H(+). It participates in amino-acid biosynthesis; L-methionine biosynthesis via salvage pathway; S-methyl-5-thio-alpha-D-ribose 1-phosphate from S-methyl-5'-thioadenosine (hydrolase route): step 2/2. Its function is as follows. Catalyzes the phosphorylation of methylthioribose into methylthioribose-1-phosphate. In Oryza sativa subsp. japonica (Rice), this protein is Methylthioribose kinase 2 (MTK2).